Consider the following 217-residue polypeptide: Probable GTP-binding protein EngB (217 aa).

The EngB-type G domain maps to alanine 37–glutamate 214. GTP-binding positions include glycine 45–serine 52, glycine 72–glutamate 76, aspartate 92–glycine 95, threonine 159–aspartate 162, and threonine 193–serine 195. 2 residues coordinate Mg(2+): serine 52 and threonine 74.

It belongs to the TRAFAC class TrmE-Era-EngA-EngB-Septin-like GTPase superfamily. EngB GTPase family. Requires Mg(2+) as cofactor.

In terms of biological role, necessary for normal cell division and for the maintenance of normal septation. This is Probable GTP-binding protein EngB from Rhodopseudomonas palustris (strain BisB5).